We begin with the raw amino-acid sequence, 254 residues long: NAD-dependent protein deacetylase 1 (254 aa).

One can recognise a Deacetylase sirtuin-type domain in the interval 3–252 (VDFTTDELDE…PKLLDRLRGM (250 aa)). 8 residues coordinate NAD(+): alanine 29, threonine 33, phenylalanine 40, arginine 41, glutamine 105, valine 107, aspartate 108, and histidine 123. Phenylalanine 40 serves as a coordination point for nicotinamide. Nicotinamide-binding residues include valine 107 and aspartate 108. Residue histidine 123 is the Proton acceptor of the active site. Residues cysteine 131, cysteine 134, cysteine 154, and cysteine 157 each contribute to the Zn(2+) site. Residues threonine 195, serine 196, and asparagine 220 each coordinate NAD(+).

It belongs to the sirtuin family. Class U subfamily. Zn(2+) is required as a cofactor.

Its subcellular location is the cytoplasm. The enzyme catalyses N(6)-acetyl-L-lysyl-[protein] + NAD(+) + H2O = 2''-O-acetyl-ADP-D-ribose + nicotinamide + L-lysyl-[protein]. Functionally, NAD-dependent protein deacetylase which modulates the activities of several enzymes which are inactive in their acetylated form. Deacetylates the N-terminal lysine residue of Alba, the major archaeal chromatin protein and that, in turn, increases Alba's DNA binding affinity, thereby repressing transcription. In Pyrobaculum aerophilum (strain ATCC 51768 / DSM 7523 / JCM 9630 / CIP 104966 / NBRC 100827 / IM2), this protein is NAD-dependent protein deacetylase 1.